The primary structure comprises 105 residues: Large ribosomal subunit protein bL21 (105 aa).

It belongs to the bacterial ribosomal protein bL21 family. Part of the 50S ribosomal subunit. Contacts protein L20.

Its function is as follows. This protein binds to 23S rRNA in the presence of protein L20. The chain is Large ribosomal subunit protein bL21 from Parabacteroides distasonis (strain ATCC 8503 / DSM 20701 / CIP 104284 / JCM 5825 / NCTC 11152).